The sequence spans 349 residues: Probable L-asparaginase periplasmic (349 aa).

An N-terminal signal peptide occupies residues 1–21 (MKLTKLALCTLFGLGVSIANA). Positions 25 to 349 (PNITILATGG…KVIQQYFEDF (325 aa)) constitute an Asparaginase/glutaminase domain. The active-site O-isoaspartyl threonine intermediate is the T35. Residues S81 and 112–113 (TD) each bind substrate. The cysteines at positions 100 and 128 are disulfide-linked.

This sequence belongs to the asparaginase 1 family.

Its subcellular location is the periplasm. It carries out the reaction L-asparagine + H2O = L-aspartate + NH4(+). The polypeptide is Probable L-asparaginase periplasmic (ansB) (Haemophilus influenzae (strain ATCC 51907 / DSM 11121 / KW20 / Rd)).